A 332-amino-acid chain; its full sequence is Lipoyl synthase (332 aa).

Residues cysteine 74, cysteine 79, cysteine 85, cysteine 100, cysteine 104, cysteine 107, and serine 314 each coordinate [4Fe-4S] cluster. In terms of domain architecture, Radical SAM core spans 85–303 (CFGKGTATFM…EQEAYRMGFS (219 aa)).

This sequence belongs to the radical SAM superfamily. Lipoyl synthase family. It depends on [4Fe-4S] cluster as a cofactor.

It is found in the cytoplasm. It carries out the reaction [[Fe-S] cluster scaffold protein carrying a second [4Fe-4S](2+) cluster] + N(6)-octanoyl-L-lysyl-[protein] + 2 oxidized [2Fe-2S]-[ferredoxin] + 2 S-adenosyl-L-methionine + 4 H(+) = [[Fe-S] cluster scaffold protein] + N(6)-[(R)-dihydrolipoyl]-L-lysyl-[protein] + 4 Fe(3+) + 2 hydrogen sulfide + 2 5'-deoxyadenosine + 2 L-methionine + 2 reduced [2Fe-2S]-[ferredoxin]. The protein operates within protein modification; protein lipoylation via endogenous pathway; protein N(6)-(lipoyl)lysine from octanoyl-[acyl-carrier-protein]: step 2/2. Its function is as follows. Catalyzes the radical-mediated insertion of two sulfur atoms into the C-6 and C-8 positions of the octanoyl moiety bound to the lipoyl domains of lipoate-dependent enzymes, thereby converting the octanoylated domains into lipoylated derivatives. The polypeptide is Lipoyl synthase (Verminephrobacter eiseniae (strain EF01-2)).